Here is a 150-residue protein sequence, read N- to C-terminus: Phosphopantetheine adenylyltransferase (150 aa).

A substrate-binding site is contributed by Thr9. Residues 9-10 (TF) and His17 each bind ATP. Positions 41, 73, and 87 each coordinate substrate. Residues 88–90 (GIR), Glu98, and 122–128 (LTCVSST) each bind ATP.

Belongs to the bacterial CoaD family. Homohexamer. The cofactor is Mg(2+).

The protein resides in the cytoplasm. It catalyses the reaction (R)-4'-phosphopantetheine + ATP + H(+) = 3'-dephospho-CoA + diphosphate. It functions in the pathway cofactor biosynthesis; coenzyme A biosynthesis; CoA from (R)-pantothenate: step 4/5. In terms of biological role, reversibly transfers an adenylyl group from ATP to 4'-phosphopantetheine, yielding dephospho-CoA (dPCoA) and pyrophosphate. This is Phosphopantetheine adenylyltransferase from Bacteroides fragilis (strain ATCC 25285 / DSM 2151 / CCUG 4856 / JCM 11019 / LMG 10263 / NCTC 9343 / Onslow / VPI 2553 / EN-2).